We begin with the raw amino-acid sequence, 33 residues long: Gastrin (33 aa).

2 positions are modified to pyrrolidone carboxylic acid: Gln-1 and Gln-18. At Tyr-28 the chain carries Sulfotyrosine. Phe-33 carries the phenylalanine amide modification.

This sequence belongs to the gastrin/cholecystokinin family.

Its subcellular location is the secreted. In terms of biological role, gastrin stimulates the stomach mucosa to produce and secrete hydrochloric acid and the pancreas to secrete its digestive enzymes. It also stimulates smooth muscle contraction and increases blood circulation and water secretion in the stomach and intestine. In Didelphis virginiana (North American opossum), this protein is Gastrin (GAST).